We begin with the raw amino-acid sequence, 201 residues long: Thylakoid membrane protein slr1796 (201 aa).

Residues 16 to 36 (FLIVSLAFAMLLLGIWGTLPF) form a helical membrane-spanning segment.

It localises to the cellular thylakoid membrane. The protein is Thylakoid membrane protein slr1796 of Synechocystis sp. (strain ATCC 27184 / PCC 6803 / Kazusa).